A 401-amino-acid chain; its full sequence is 8-amino-7-oxononanoate synthase (401 aa).

Arginine 24 lines the substrate pocket. 111–112 (GF) is a binding site for pyridoxal 5'-phosphate. Histidine 137 contacts substrate. Residues serine 183, histidine 211, and threonine 240 each coordinate pyridoxal 5'-phosphate. Lysine 243 is modified (N6-(pyridoxal phosphate)lysine). Threonine 357 is a substrate binding site.

It belongs to the class-II pyridoxal-phosphate-dependent aminotransferase family. BioF subfamily. As to quaternary structure, homodimer. Requires pyridoxal 5'-phosphate as cofactor.

It catalyses the reaction 6-carboxyhexanoyl-[ACP] + L-alanine + H(+) = (8S)-8-amino-7-oxononanoate + holo-[ACP] + CO2. It functions in the pathway cofactor biosynthesis; biotin biosynthesis. In terms of biological role, catalyzes the decarboxylative condensation of pimeloyl-[acyl-carrier protein] and L-alanine to produce 8-amino-7-oxononanoate (AON), [acyl-carrier protein], and carbon dioxide. The sequence is that of 8-amino-7-oxononanoate synthase from Xanthomonas campestris pv. campestris (strain 8004).